The chain runs to 339 residues: MEPIHNPPPQTCSYSRPSTTYTSFKDASCGTKVTRIIIALFLIVISCGLILCAYTFRDLLDADYSAQEGPQQATKLLQQLDKVLTGPPLPIWDNEHLFQFSCLMQNKHRRVLPIDICNPLTKFNFLEYICNCLMTKQSVNVNETDMCELFCPPTCTPENYRRLLCTSSVFPFVMWHDPSADTQEAMLTKMDQTMSSGRVGNSHWVLVIVDIEHRCVTFFDSFYNYIASPQQMREQLEGLAASLGAIYPKEGGADSDQEELLSPFQVRIGSTVKVQSPGEFTCGAWCCQFLAWYLENPDFDLEEKVPTNPSERRALLADFISTTEQAMSRYSSLSWPTTD.

A helical transmembrane segment spans residues 36–56 (IIIALFLIVISCGLILCAYTF). Catalysis depends on residues His203, Asp220, and Cys282.

The protein belongs to the peptidase C48 family.

The protein localises to the secreted. It localises to the host cell. It is found in the membrane. Its function is as follows. Effector proteins function to alter host cell physiology and promote bacterial survival in host tissues. This protease possesses deubiquitinating and deneddylating activities. In Chlamydia trachomatis serovar A (strain ATCC VR-571B / DSM 19440 / HAR-13), this protein is Deubiquitinase and deneddylase Dub2 (cdu2).